A 327-amino-acid polypeptide reads, in one-letter code: Urokinase plasminogen activator surface receptor (327 aa).

A signal peptide spans 1 to 23 (MGLPRRLLLLLLLATTCVPASQG). UPAR/Ly6 domains are found at residues 24-117 (LQCM…GRYL), 117-212 (LECA…PPNG), and 213-298 (FQCY…SPTG). 3 cysteine pairs are disulfide-bonded: C26–C47, C29–C35, and C40–C68. N32 carries N-linked (GlcNAc...) asparagine glycosylation. N75 carries N-linked (GlcNAc...) asparagine glycosylation. Disulfide bonds link C94–C99, C119–C146, C122–C129, C139–C168, C174–C191, C192–C197, C215–C243, C218–C226, C236–C262, C268–C287, and C288–C293. N-linked (GlcNAc...) asparagine glycosylation is found at N183, N193, N221, N254, and N282. G298 carries GPI-anchor amidated glycine lipidation. Residues 299 to 327 (GAPRPGPAQLSLIASLLLTLGLWGVLLWT) constitute a propeptide, removed in mature form.

In terms of assembly, monomer. Interacts (via the UPAR/Ly6 domains) with SRPX2. Interacts with MRC2. Interacts with SORL1 (via N-terminal ectodomain); this interaction decreases PLAUR internalization. The ternary complex composed of PLAUR-PLAU-SERPINE1 also interacts with SORL1. Interacts with CD82; this interaction prevents PLAUR from binding to its high affinity ligand PLAU. In terms of tissue distribution, expressed in angiogenic endothelial cells (at protein level).

It localises to the cell membrane. The protein resides in the secreted. Its function is as follows. Acts as a receptor for urokinase plasminogen activator. Plays a role in localizing and promoting plasmin formation. Mediates the proteolysis-independent signal transduction activation effects of U-PA. This is Urokinase plasminogen activator surface receptor (Plaur) from Mus musculus (Mouse).